A 1372-amino-acid chain; its full sequence is Disease resistance protein RRS1B (1372 aa).

In terms of domain architecture, TIR spans 2–137; that stretch reads TESEQIVYIS…ETVRDVYEKL (136 aa). Residues 166–417 form the NB-ARC domain; that stretch reads VGIWGMPGIG…GCGFFPHVGI (252 aa). Residue 170–177 participates in ATP binding; the sequence is GMPGIGKT. The stretch at 491 to 515 is one LRR 1 repeat; that stretch reads PEEIEGMFLDTSNLSFDIKHVAFDN. One copy of the LRR 2; degenerate repeat lies at 528–544; sequence NPEVHHVNNFLKGSLSS. LRR repeat units follow at residues 545-568, 570-591, 614-637, 638-658, 659-681, 693-718, 723-747, 749-767, 768-792, and 798-823; these read LPNV…NFDP, HLVE…TKDL, AQNL…TGQL, LHLR…PEIP, PNIE…IVKP, IPGL…KIST, PGKL…VNLE, LKAL…QGFP, RNLK…SLEF, and CVSL…CFDL. Residues 950–964 carry the Nuclear localization signal motif; it reads INLHCWALGKAVERD. The segment at residues 1174–1240 is a DNA-binding region (WRKY); sequence DRGSRSSDLW…YISEHNHPFP (67 aa). Disordered regions lie at residues 1246-1288 and 1337-1372; these read LAGS…ASPP and QTMF…ILNR. The segment covering 1249–1269 has biased composition (low complexity); sequence STRSSSSKCSDVTTSASSTVS. Residues 1270-1279 show a composition bias toward basic and acidic residues; that stretch reads QDKEGPDKSH. A compositionally biased stretch (polar residues) spans 1337–1348; the sequence is QTMFLSRRSSGG.

This sequence belongs to the disease resistance TIR-NB-LRR family. In terms of assembly, interacts with RPS4B. RPS4B-RRS1B heterodimer interacts with the bacterial effectors AvrRps4 and PopP2.

The protein resides in the nucleus. In terms of biological role, transcription factor. Interacts specifically with the W box (5'-(T)TGAC[CT]-3'), a frequently occurring elicitor-responsive cis-acting element. Also acts as a disease resistance protein that specifically recognizes the AvrRps4 type III effector avirulence protein from P.syringae. Heterodimerization with RPS4B is required to form a functional complex to recognize AvrRps4 and to mediate the hypersensitive response. In Arabidopsis thaliana (Mouse-ear cress), this protein is Disease resistance protein RRS1B.